The sequence spans 487 residues: L-tartrate/succinate antiporter (487 aa).

Transmembrane regions (helical) follow at residues 10 to 30 (YLAP…AGLE), 33 to 53 (TWLY…EPVP), 54 to 74 (GAVV…WLLF), 93 to 113 (WAVF…FMFG), 137 to 157 (TLFL…VTPS), 189 to 209 (IGSY…AIFL), 236 to 256 (FLGM…LAYV), 292 to 312 (LMVG…AAMV), 313 to 333 (GYSV…DIVS), 340 to 360 (VFFW…TGFI), 370 to 390 (SLSG…FYLL), 393 to 413 (FFAS…AAAL), 418 to 438 (IPLP…SILT), and 465 to 485 (IFGL…MPVV).

This sequence belongs to the SLC13A/DASS transporter (TC 2.A.47) family. DIT1 subfamily.

It is found in the cell inner membrane. It catalyses the reaction (2R,3R)-tartrate(out) + succinate(in) = (2R,3R)-tartrate(in) + succinate(out). Functionally, catalyzes the uptake of tartrate in exchange for intracellular succinate. Essential for anaerobic L-tartrate fermentation. The chain is L-tartrate/succinate antiporter (ttdT) from Shigella boydii serotype 4 (strain Sb227).